The chain runs to 330 residues: Serpentine receptor class J-38 (330 aa).

The next 7 helical transmembrane spans lie at 6–26, 43–63, 98–118, 135–155, 200–220, 253–273, and 285–305; these read IYIF…PIFV, LLLF…VVPI, LVAS…LVIY, LLLS…LGYA, TIIW…LALL, IPIV…IFGI, and GALG…LPIF.

The protein belongs to the nematode receptor-like protein srj family.

The protein localises to the membrane. This chain is Serpentine receptor class J-38 (srj-38), found in Caenorhabditis elegans.